The following is a 294-amino-acid chain: MVPGEEPARELMAVLLTPRFRRLVSQNELPGPGLNGPSSRNRRDGFCRKRRTGCSGPFQATQLWDGIIHSLQAQVEIKRRRHHLQTYKDCFTGSDAVDVVLSHLMQNTCLSSNDISCLKGVHLCQVLMNHKVFEPVGMKKLFKKEKELEFEDSNISLYRFLGNKSSYDCCKRQKDAENEFNETLRPGYEMISNPLAQEIGEERIEELIHTINGNPALCPNITVQKPFLRLSKEDVWKEQTLLCLLQLIHLPFLDNILEPPVKTQNLQLNKEEDLVITNTCLDRELIPSLCLPEK.

A DEP domain is found at 71–162 (LQAQVEIKRR…SNISLYRFLG (92 aa)).

The sequence is that of DEP domain-containing protein 4 (DEPDC4) from Homo sapiens (Human).